Consider the following 766-residue polypeptide: DENN domain-containing protein 1B (766 aa).

Positions 14–143 constitute a uDENN domain; the sequence is DLVLKVKCHA…YNHPVPKANT (130 aa). Residues 160–296 enclose the cDENN domain; sequence GLPTIPESRN…VVSALKNKLK (137 aa). A dDENN domain is found at 298-375; it reads QSTATGDGVA…DGRLAKLNAG (78 aa). Positions 378-382 match the FXDXF motif motif; it reads FSDIF. The tract at residues 472-523 is disordered; sequence NEKGENREKHKLSQTHLKRPHKSLDGTLYDDDDDDDDIERASKISSEDGEET. Residues 480–492 are compositionally biased toward basic residues; it reads KHKLSQTHLKRPH. Acidic residues predominate over residues 499 to 509; that stretch reads LYDDDDDDDDI. The residue at position 500 (tyrosine 500) is a Phosphotyrosine. Residues serine 516, serine 517, serine 530, and serine 533 each carry the phosphoserine modification. A Clathrin box motif is present at residues 547–556; that stretch reads DLLGEILDTL. Disordered regions lie at residues 611–634 and 652–732; these read LGQD…VSSG and LCAD…KPSK. A phosphoserine mark is found at serine 632 and serine 633. The span at 694–704 shows a compositional bias: polar residues; it reads TPGQAPLQSED. The span at 722-732 shows a compositional bias: basic and acidic residues; it reads KAGKEDTKPSK.

In terms of assembly, interacts with RAB35. Interacts with clathrin heavy chain/CLTC. Interacts with components of the adapter protein complex 2 (AP-2) AP2A2 and AP2B1. Interacts with CD3E. In terms of processing, phosphorylated on serine and/or threonine, possibly regulating the guanine nucleotide exchange factor (GEF) activity. Expressed in a subset of dendritic cells (DCs).

It localises to the cytoplasm. The protein localises to the cytosol. Its subcellular location is the cytoplasmic vesicle. The protein resides in the clathrin-coated vesicle. Its function is as follows. Guanine nucleotide exchange factor (GEF) for RAB35 that acts as a regulator of T-cell receptor (TCR) internalization in TH2 cells. Acts by promoting the exchange of GDP to GTP, converting inactive GDP-bound RAB35 into its active GTP-bound form. Plays a role in clathrin-mediated endocytosis. Controls cytokine production in TH2 lymphocytes by controlling the rate of TCR internalization and routing to endosomes: acts by mediating clathrin-mediated endocytosis of TCR via its interaction with the adapter protein complex 2 (AP-2) and GEF activity. Dysregulation leads to impaired TCR down-modulation and recycling, affecting cytokine production in TH2 cells. The sequence is that of DENN domain-containing protein 1B from Mus musculus (Mouse).